The chain runs to 45 residues: uncharacterized protein (45 aa).

This is an uncharacterized protein from Haemophilus influenzae (strain ATCC 51907 / DSM 11121 / KW20 / Rd).